The sequence spans 693 residues: Elongation factor G (693 aa).

The tr-type G domain occupies 8-282; that stretch reads KNTRNIGIMA…AVIDYLPSPL (275 aa). Residues 17–24, 81–85, and 135–138 each bind GTP; these read AHIDAGKT, DTPGH, and NKMD.

This sequence belongs to the TRAFAC class translation factor GTPase superfamily. Classic translation factor GTPase family. EF-G/EF-2 subfamily.

It localises to the cytoplasm. Its function is as follows. Catalyzes the GTP-dependent ribosomal translocation step during translation elongation. During this step, the ribosome changes from the pre-translocational (PRE) to the post-translocational (POST) state as the newly formed A-site-bound peptidyl-tRNA and P-site-bound deacylated tRNA move to the P and E sites, respectively. Catalyzes the coordinated movement of the two tRNA molecules, the mRNA and conformational changes in the ribosome. In Staphylococcus epidermidis (strain ATCC 35984 / DSM 28319 / BCRC 17069 / CCUG 31568 / BM 3577 / RP62A), this protein is Elongation factor G.